A 269-amino-acid chain; its full sequence is Bis(5'-nucleosyl)-tetraphosphatase, symmetrical (269 aa).

It belongs to the Ap4A hydrolase family.

It carries out the reaction P(1),P(4)-bis(5'-adenosyl) tetraphosphate + H2O = 2 ADP + 2 H(+). In terms of biological role, hydrolyzes diadenosine 5',5'''-P1,P4-tetraphosphate to yield ADP. The chain is Bis(5'-nucleosyl)-tetraphosphatase, symmetrical from Vibrio vulnificus (strain YJ016).